The primary structure comprises 372 residues: Glutamate 5-kinase (372 aa).

Lysine 14 is an ATP binding site. The substrate site is built by serine 54, aspartate 141, and asparagine 153. Residue 173 to 174 (TD) participates in ATP binding. A PUA domain is found at 280 to 358 (RGTLVLDDGA…DAIVGLLGYM (79 aa)).

It belongs to the glutamate 5-kinase family.

It is found in the cytoplasm. It catalyses the reaction L-glutamate + ATP = L-glutamyl 5-phosphate + ADP. The protein operates within amino-acid biosynthesis; L-proline biosynthesis; L-glutamate 5-semialdehyde from L-glutamate: step 1/2. Catalyzes the transfer of a phosphate group to glutamate to form L-glutamate 5-phosphate. This is Glutamate 5-kinase from Pseudomonas fluorescens (strain Pf0-1).